The chain runs to 346 residues: DNA primase small subunit PriS (346 aa).

Catalysis depends on residues Asp97, Asp99, and Asp280.

The protein belongs to the eukaryotic-type primase small subunit family. In terms of assembly, heterodimer of a small subunit (PriS) and a large subunit (PriL). Requires Mg(2+) as cofactor. It depends on Mn(2+) as a cofactor.

In terms of biological role, catalytic subunit of DNA primase, an RNA polymerase that catalyzes the synthesis of short RNA molecules used as primers for DNA polymerase during DNA replication. The small subunit contains the primase catalytic core and has DNA synthesis activity on its own. Binding to the large subunit stabilizes and modulates the activity, increasing the rate of DNA synthesis while decreasing the length of the DNA fragments, and conferring RNA synthesis capability. The DNA polymerase activity may enable DNA primase to also catalyze primer extension after primer synthesis. May also play a role in DNA repair. This chain is DNA primase small subunit PriS, found in Thermococcus kodakarensis (strain ATCC BAA-918 / JCM 12380 / KOD1) (Pyrococcus kodakaraensis (strain KOD1)).